The following is a 586-amino-acid chain: Arginine--tRNA ligase (586 aa).

Positions 131-141 match the 'HIGH' region motif; it reads ANPTGPMHVGH.

It belongs to the class-I aminoacyl-tRNA synthetase family. In terms of assembly, monomer.

The protein resides in the cytoplasm. The enzyme catalyses tRNA(Arg) + L-arginine + ATP = L-arginyl-tRNA(Arg) + AMP + diphosphate. This Xanthobacter autotrophicus (strain ATCC BAA-1158 / Py2) protein is Arginine--tRNA ligase.